The sequence spans 198 residues: MTLPLILGSGSKYRREILDRLHLNYDVVKPDIDESAISSESPQQLVGRLAEAKARAVEKRMTYDNAIIIGSDQVAVCDGNILGKPGNRENAVRQLSSFIGKTVTFYTGLAVFNTEAQQCEVRVEPFEVEFRQLTAEEIERYVELENPFDCAGSFKSEGLGISLFSGLKGNDPNTLIGLPAIALLDMLRTHGINPLNKD.

The active-site Proton acceptor is Asp-72.

It belongs to the Maf family. YceF subfamily. It depends on a divalent metal cation as a cofactor.

It localises to the cytoplasm. The catalysed reaction is N(7)-methyl-GTP + H2O = N(7)-methyl-GMP + diphosphate + H(+). Its function is as follows. Nucleoside triphosphate pyrophosphatase that hydrolyzes 7-methyl-GTP (m(7)GTP). May have a dual role in cell division arrest and in preventing the incorporation of modified nucleotides into cellular nucleic acids. The chain is 7-methyl-GTP pyrophosphatase from Idiomarina loihiensis (strain ATCC BAA-735 / DSM 15497 / L2-TR).